The chain runs to 305 residues: Homoserine O-acetyltransferase (305 aa).

Cys-142 serves as the catalytic Acyl-thioester intermediate. Substrate contacts are provided by Lys-163 and Ser-192. The active-site Proton acceptor is His-235. Glu-237 is an active-site residue. Arg-249 is a binding site for substrate.

The protein belongs to the MetA family.

The protein resides in the cytoplasm. The catalysed reaction is L-homoserine + acetyl-CoA = O-acetyl-L-homoserine + CoA. Its pathway is amino-acid biosynthesis; L-methionine biosynthesis via de novo pathway; O-acetyl-L-homoserine from L-homoserine: step 1/1. Transfers an acetyl group from acetyl-CoA to L-homoserine, forming acetyl-L-homoserine. In Dinoroseobacter shibae (strain DSM 16493 / NCIMB 14021 / DFL 12), this protein is Homoserine O-acetyltransferase.